Here is a 247-residue protein sequence, read N- to C-terminus: Anamorsin homolog (247 aa).

The tract at residues 4–128 (FKGLQKSLYI…ETGSSARLSF (125 aa)) is N-terminal SAM-like domain. Residues 129–160 (AKKNASALNVWKISGDDEELIDEEDLLDEEDK) are linker. Positions 171, 180, 183, and 185 each coordinate [2Fe-2S] cluster. The tract at residues 171-185 (CSTTGKRKACKNCSC) is fe-S binding site A. 4 residues coordinate [4Fe-4S] cluster: Cys-208, Cys-211, Cys-219, and Cys-222. 2 short sequence motifs (cx2C motif) span residues 208 to 211 (CGNC) and 219 to 222 (CSTC). A fe-S binding site B region spans residues 208–222 (CGNCYLGDAFRCSTC).

Belongs to the anamorsin family. Monomer. [2Fe-2S] cluster is required as a cofactor. The cofactor is [4Fe-4S] cluster.

It is found in the cytoplasm. Its subcellular location is the mitochondrion intermembrane space. In terms of biological role, component of the cytosolic iron-sulfur (Fe-S) protein assembly (CIA) machinery. Required for the maturation of extramitochondrial Fe-S proteins. Part of an electron transfer chain functioning in an early step of cytosolic Fe-S biogenesis, facilitating the de novo assembly of a [4Fe-4S] cluster on the cytosolic Fe-S scaffold complex. Electrons are transferred from NADPH via a FAD- and FMN-containing diflavin oxidoreductase. Together with the diflavin oxidoreductase, also required for the assembly of the diferric tyrosyl radical cofactor of ribonucleotide reductase (RNR), probably by providing electrons for reduction during radical cofactor maturation in the catalytic small subunit. The protein is Anamorsin homolog of Drosophila persimilis (Fruit fly).